Reading from the N-terminus, the 181-residue chain is RNA pyrophosphohydrolase (181 aa).

The Nudix hydrolase domain occupies 6–148 (GFRPNVGIIV…KRQVYRQALQ (143 aa)). The Nudix box signature appears at 38–59 (GGVEANETPLEALYRELREEVG).

Belongs to the Nudix hydrolase family. RppH subfamily. Requires a divalent metal cation as cofactor.

In terms of biological role, accelerates the degradation of transcripts by removing pyrophosphate from the 5'-end of triphosphorylated RNA, leading to a more labile monophosphorylated state that can stimulate subsequent ribonuclease cleavage. The sequence is that of RNA pyrophosphohydrolase from Halorhodospira halophila (strain DSM 244 / SL1) (Ectothiorhodospira halophila (strain DSM 244 / SL1)).